A 180-amino-acid polypeptide reads, in one-letter code: ATP synthase subunit delta (180 aa).

It belongs to the ATPase delta chain family. F-type ATPases have 2 components, F(1) - the catalytic core - and F(0) - the membrane proton channel. F(1) has five subunits: alpha(3), beta(3), gamma(1), delta(1), epsilon(1). F(0) has three main subunits: a(1), b(2) and c(10-14). The alpha and beta chains form an alternating ring which encloses part of the gamma chain. F(1) is attached to F(0) by a central stalk formed by the gamma and epsilon chains, while a peripheral stalk is formed by the delta and b chains.

The protein localises to the cell membrane. In terms of biological role, f(1)F(0) ATP synthase produces ATP from ADP in the presence of a proton or sodium gradient. F-type ATPases consist of two structural domains, F(1) containing the extramembraneous catalytic core and F(0) containing the membrane proton channel, linked together by a central stalk and a peripheral stalk. During catalysis, ATP synthesis in the catalytic domain of F(1) is coupled via a rotary mechanism of the central stalk subunits to proton translocation. This protein is part of the stalk that links CF(0) to CF(1). It either transmits conformational changes from CF(0) to CF(1) or is implicated in proton conduction. The sequence is that of ATP synthase subunit delta from Enterococcus faecalis (strain ATCC 700802 / V583).